Reading from the N-terminus, the 92-residue chain is Small ribosomal subunit protein uS19 (92 aa).

Belongs to the universal ribosomal protein uS19 family.

Its function is as follows. Protein S19 forms a complex with S13 that binds strongly to the 16S ribosomal RNA. This Trichormus variabilis (strain ATCC 29413 / PCC 7937) (Anabaena variabilis) protein is Small ribosomal subunit protein uS19.